A 208-amino-acid polypeptide reads, in one-letter code: Dephospho-CoA kinase (208 aa).

Residues 3–208 (EIGLTGGIGS…ALSAAGVTQA (206 aa)) enclose the DPCK domain. Residue 11 to 16 (GSGKTR) coordinates ATP.

This sequence belongs to the CoaE family.

Its subcellular location is the cytoplasm. It carries out the reaction 3'-dephospho-CoA + ATP = ADP + CoA + H(+). It participates in cofactor biosynthesis; coenzyme A biosynthesis; CoA from (R)-pantothenate: step 5/5. Its function is as follows. Catalyzes the phosphorylation of the 3'-hydroxyl group of dephosphocoenzyme A to form coenzyme A. The protein is Dephospho-CoA kinase of Cupriavidus pinatubonensis (strain JMP 134 / LMG 1197) (Cupriavidus necator (strain JMP 134)).